The sequence spans 1052 residues: Multidrug resistance protein MdtB (1052 aa).

The next 11 membrane-spanning stretches (helical) occupy residues leucine 15–glycine 37, phenylalanine 345–leucine 362, alanine 367–leucine 389, leucine 396–asparagine 418, glycine 438–phenylalanine 460, phenylalanine 472–methionine 494, histidine 535–isoleucine 557, leucine 867–isoleucine 889, leucine 909–valine 931, isoleucine 968–alanine 990, and methionine 1000–phenylalanine 1022. The interval lysine 1032–glutamine 1052 is disordered.

This sequence belongs to the resistance-nodulation-cell division (RND) (TC 2.A.6) family. MdtB subfamily. As to quaternary structure, part of a tripartite efflux system composed of MdtA, MdtB and MdtC. MdtB forms a heteromultimer with MdtC.

The protein resides in the cell inner membrane. The protein is Multidrug resistance protein MdtB of Yersinia pseudotuberculosis serotype I (strain IP32953).